We begin with the raw amino-acid sequence, 311 residues long: Olfactory receptor 6B1 (311 aa).

Residues 1–25 (MELENQTRVTKFILVGFPGSLSMRA) are Extracellular-facing. Asparagine 5 carries an N-linked (GlcNAc...) asparagine glycan. A helical transmembrane segment spans residues 26–46 (AMFLIFLVAYILTVAENVIII). The Cytoplasmic portion of the chain corresponds to 47-54 (LLVLQNRP). The helical transmembrane segment at 55–75 (LHKPMYFFLANLSFLETWYIS) threads the bilayer. Residues 76-99 (VTVPKLLFSFWSVNNSISFTLCMI) are Extracellular-facing. Cysteine 97 and cysteine 189 are disulfide-bonded. A helical membrane pass occupies residues 100–120 (QLYFFIALMCTECVLLAAMAY). Over 121–139 (DRYVAICRPLHYPTIMSHG) the chain is Cytoplasmic. A helical transmembrane segment spans residues 140-160 (LCFRLALGSWAIGFGISLAKI). Over 161–196 (YFISCLSFCGPNVINHFFCDISPVLNLSCTDMSITE) the chain is Extracellular. The chain crosses the membrane as a helical span at residues 197–217 (LVDFILALVIFLFPLFITVLS). At 218-235 (YGCILATILCMPTGKQKA) the chain is on the cytoplasmic side. Residues 236–256 (FSTCASHLVVVTIFYSAIIFM) form a helical membrane-spanning segment. Residues 257–269 (YARPRVIHAFNMN) are Extracellular-facing. A helical transmembrane segment spans residues 270–290 (KIISIFYAIVTPSLNPFIYCL). Topologically, residues 291 to 311 (RNREVKEALKKLAYCQASRSD) are cytoplasmic.

Belongs to the G-protein coupled receptor 1 family.

Its subcellular location is the cell membrane. Its function is as follows. Odorant receptor. The protein is Olfactory receptor 6B1 (OR6B1) of Homo sapiens (Human).